A 29-amino-acid chain; its full sequence is Cyclotide cter-N (29 aa).

The segment at residues 1–29 (GSAFCGETCVLGTCYTPDCSCTALVCLKN) is a cross-link (cyclopeptide (Gly-Asn)). Intrachain disulfides connect cysteine 5/cysteine 19, cysteine 9/cysteine 21, and cysteine 14/cysteine 26.

Post-translationally, this is a cyclic peptide.

The protein resides in the secreted. Its function is as follows. Probably participates in a plant defense mechanism. This is Cyclotide cter-N from Clitoria ternatea (Butterfly pea).